Consider the following 267-residue polypeptide: 5'-nucleotidase SurE (267 aa).

A divalent metal cation is bound by residues aspartate 14, aspartate 15, serine 45, and asparagine 100.

The protein belongs to the SurE nucleotidase family. A divalent metal cation serves as cofactor.

Its subcellular location is the cytoplasm. The enzyme catalyses a ribonucleoside 5'-phosphate + H2O = a ribonucleoside + phosphate. In terms of biological role, nucleotidase that shows phosphatase activity on nucleoside 5'-monophosphates. The polypeptide is 5'-nucleotidase SurE (Methanosarcina acetivorans (strain ATCC 35395 / DSM 2834 / JCM 12185 / C2A)).